The primary structure comprises 238 residues: 2,3,4,5-tetrahydropyridine-2,6-dicarboxylate N-acetyltransferase (238 aa).

This sequence belongs to the transferase hexapeptide repeat family. DapH subfamily.

It carries out the reaction (S)-2,3,4,5-tetrahydrodipicolinate + acetyl-CoA + H2O = L-2-acetamido-6-oxoheptanedioate + CoA. It functions in the pathway amino-acid biosynthesis; L-lysine biosynthesis via DAP pathway; LL-2,6-diaminopimelate from (S)-tetrahydrodipicolinate (acetylase route): step 1/3. In terms of biological role, catalyzes the transfer of an acetyl group from acetyl-CoA to tetrahydrodipicolinate. The protein is 2,3,4,5-tetrahydropyridine-2,6-dicarboxylate N-acetyltransferase of Pseudothermotoga lettingae (strain ATCC BAA-301 / DSM 14385 / NBRC 107922 / TMO) (Thermotoga lettingae).